Consider the following 810-residue polypeptide: LPS-assembly protein LptD (810 aa).

The signal sequence occupies residues 1–29 (MTKRTLGYSYPIALTISLVPALTPAIVQA).

It belongs to the LptD family. In terms of assembly, component of the lipopolysaccharide transport and assembly complex. Interacts with LptE and LptA.

It localises to the cell outer membrane. Its function is as follows. Together with LptE, is involved in the assembly of lipopolysaccharide (LPS) at the surface of the outer membrane. The protein is LPS-assembly protein LptD of Aeromonas hydrophila subsp. hydrophila (strain ATCC 7966 / DSM 30187 / BCRC 13018 / CCUG 14551 / JCM 1027 / KCTC 2358 / NCIMB 9240 / NCTC 8049).